A 415-amino-acid polypeptide reads, in one-letter code: Peptide chain release factor subunit 1 (415 aa).

This sequence belongs to the eukaryotic release factor 1 family. Heterodimer of two subunits, one of which binds GTP.

The protein localises to the cytoplasm. Directs the termination of nascent peptide synthesis (translation) in response to the termination codons UAA, UAG and UGA. This chain is Peptide chain release factor subunit 1, found in Thermococcus sibiricus (strain DSM 12597 / MM 739).